We begin with the raw amino-acid sequence, 988 residues long: Transcriptional regulator of yeast form adherence 5 (988 aa).

C2H2-type zinc fingers lie at residues 7–29 and 35–59; these read YICA…ERSH and FHCL…TVHH. The segment covering 59 to 83 has biased composition (polar residues); that stretch reads HTNLNPSTLPSNKSLKNPTTNPLDL. Disordered stretches follow at residues 59 to 129 and 174 to 229; these read HTNL…SSVG and SMES…SNNN. Positions 84–106 are enriched in low complexity; sequence SNNEGTTTTTKTGNRKNNSNKNG. Composition is skewed to polar residues over residues 113-129 and 174-208; these read TNPN…SSVG and SMES…EIVL.

Its subcellular location is the nucleus. Its function is as follows. Transcription factor required for yeast cell adherence to silicone substrate. This chain is Transcriptional regulator of yeast form adherence 5 (TRY5), found in Candida albicans (strain SC5314 / ATCC MYA-2876) (Yeast).